Consider the following 327-residue polypeptide: BarH-like 1 homeobox protein (327 aa).

Disordered regions lie at residues 1–90, 112–184, and 305–327; these read MEGS…AQSR, APYS…ARTA, and GASEPPPPLPPLAGVLPRAAQPR. Positions 33-54 are enriched in low complexity; that stretch reads RSPLELSPRSESSSDCSSPASP. The span at 79 to 90 shows a compositional bias: polar residues; that stretch reads QPGQLSAPAQSR. 2 stretches are compositionally biased toward basic and acidic residues: residues 133 to 143 and 152 to 166; these read AAEDFRDKLDK and SEYKVKEEGDREISS. The homeobox DNA-binding region spans 178-237; the sequence is PRKARTAFTDHQLAQLERSFERQKYLSVQDRMELAASLNLTDTQVKTWYQNRRTKWKRQT. The segment covering 316–327 has biased composition (low complexity); that stretch reads LAGVLPRAAQPR.

The protein belongs to the BAR homeobox family.

The protein resides in the nucleus. The polypeptide is BarH-like 1 homeobox protein (BARHL1) (Homo sapiens (Human)).